We begin with the raw amino-acid sequence, 911 residues long: Facilitated trehalose transporter Tret1 (911 aa).

The disordered stretch occupies residues 1–256 (MSGRDNRGAG…RIGFQQQKAT (256 aa)). The Cytoplasmic segment spans residues 1–446 (MSGRDNRGAG…VYRPTTNPIY (446 aa)). The segment covering 8–19 (GAGGGGGGGGGG) has biased composition (gly residues). Over residues 32–50 (KLKEKLTRAGEELGYHRVE) the composition is skewed to basic and acidic residues. Low complexity-rich tracts occupy residues 51-64 (SNLS…SLDT), 76-129 (AAPQ…QQLR), and 156-166 (QQIHVQQQQQQ). Phosphoserine occurs at positions 302, 303, and 304. The tract at residues 334 to 355 (VLQGSSTDSDEEGDDAEHKRLI) is disordered. Phosphoserine is present on residues Ser-374 and Ser-376. The segment at 380–402 (FLTSRQNFQQQRSISTDSRKSRR) is disordered. A compositionally biased stretch (polar residues) spans 384–395 (RQNFQQQRSIST). Residues 447 to 467 (IWTQVLAALSVSLGSLVVGFA) form a helical membrane-spanning segment. The Extracellular portion of the chain corresponds to 468–494 (SAYTSPALVSMTNTNLTSFVVTPQAAS). Asn-482 carries N-linked (GlcNAc...) asparagine glycosylation. Residues 495-515 (WVGGIMPLAGLAGGIAGGPFI) form a helical membrane-spanning segment. The Cytoplasmic portion of the chain corresponds to 516 to 527 (EYLGRRNTILAT). A helical membrane pass occupies residues 528–548 (AVPFIVSWLLIACAVNVIMVL). Topologically, residues 549 to 551 (CGR) are extracellular. A helical membrane pass occupies residues 552–572 (FLAGFCVGIASLSLPVYLGET). The Cytoplasmic segment spans residues 573–578 (VQPEVR). The chain crosses the membrane as a helical span at residues 579–599 (GTLGLLPTAFGNIGILLCFVA). Residues 600–606 (GTYMDWS) lie on the Extracellular side of the membrane. The helical transmembrane segment at 607–627 (MLAFLGASLPVPFLILMFLIP) threads the bilayer. Residues 628–690 (ETPRWYVSRG…ELLKRSNLKP (63 aa)) lie on the Cytoplasmic side of the membrane. Residues 691-711 (LSISLGLMFFQQLSGINAVIF) form a helical membrane-spanning segment. Topologically, residues 712–727 (YTVQIFQDAGSTIDGN) are extracellular. Residues 728-748 (VCTIIVGVVNFAATFIATILI) form a helical membrane-spanning segment. The Cytoplasmic portion of the chain corresponds to 749–754 (DRAGRK). Residues 755–775 (VLLYVSNVMMVLTLFVLGGFF) form a helical membrane-spanning segment. Residues 776–794 (YCKSSGMDTSNVGWLPLSC) lie on the Extracellular side of the membrane. The helical transmembrane segment at 795 to 815 (FVIYILGFSLGFGPIPWLMMG) threads the bilayer. Topologically, residues 816-821 (EILPAK) are cytoplasmic. The helical transmembrane segment at 822-842 (IRGSAASVATAFNWSCTFVVT) threads the bilayer. Over 843-855 (KSFQDMIDFMGAH) the chain is Extracellular. A helical membrane pass occupies residues 856–876 (GAFWMFGAICFIGLFFVIFYV). The Cytoplasmic segment spans residues 877-911 (PETQGKTLEDIERKMMGRVRRMSSVANIKPLSFNM). Ser-899 and Ser-900 each carry phosphoserine.

It belongs to the major facilitator superfamily. Sugar transporter (TC 2.A.1.1) family. Trehalose transporter subfamily.

It is found in the cell membrane. Low-capacity facilitative transporter for trehalose. Does not transport maltose, sucrose or lactose. Mediates the bidirectional transfer of trehalose. Responsible for the transport of trehalose synthesized in the fat body and the incorporation of trehalose into other tissues that require a carbon source, thereby regulating trehalose levels in the hemolymph. This Drosophila virilis (Fruit fly) protein is Facilitated trehalose transporter Tret1.